Consider the following 263-residue polypeptide: MGKLTGKTALITGALQGIGEGIARTFARHGANLILLDISPEIEKLADELCGRGHRCTAVVADVRDPASVAAAIKRAKEKEGRIDILVNNAGVCRLGSFLDMSDDDRDFHIDINIKGVWNVTKAVLPEMIARKDGRIVMMSSVTGDMVADPGETAYALTKAAIVGLTKSLAVEYAQSGIRVNAICPGYVRTPMAESIARQSNPEDPESVLTEMAKAIPLRRLADPLEVGELAAFLASDESSYLTGTQNVIDGGSTLPETVSVGI.

Residue 10–32 (LITGALQGIGEGIARTFARHGAN) coordinates NAD(+). Substrate is bound at residue S141. The active-site Proton acceptor is Y155.

This sequence belongs to the short-chain dehydrogenases/reductases (SDR) family.

In Escherichia coli O157:H7, this protein is Oxidoreductase UcpA (ucpA).